Here is a 96-residue protein sequence, read N- to C-terminus: DNA/RNA-binding protein Alba (96 aa).

The protein belongs to the histone-like Alba family.

It localises to the cytoplasm. The protein localises to the chromosome. In terms of biological role, binds double-stranded DNA tightly but without sequence specificity. Involved in DNA compaction. This is DNA/RNA-binding protein Alba from Methanocella arvoryzae (strain DSM 22066 / NBRC 105507 / MRE50).